A 324-amino-acid chain; its full sequence is Phospho-N-acetylmuramoyl-pentapeptide-transferase (324 aa).

9 helical membrane passes run 13 to 33, 57 to 77, 85 to 105, 121 to 141, 143 to 163, 179 to 199, 201 to 221, 238 to 260, and 303 to 323; these read VLSA…IFIP, GTPT…MLII, GMIV…DDIL, MILL…NIGT, IIIP…PLVV, IDGL…IVGF, TGHY…LGFL, LALG…IIIV, and VKLV…GFIA.

It belongs to the glycosyltransferase 4 family. MraY subfamily. The cofactor is Mg(2+).

It localises to the cell membrane. The enzyme catalyses UDP-N-acetyl-alpha-D-muramoyl-L-alanyl-gamma-D-glutamyl-meso-2,6-diaminopimeloyl-D-alanyl-D-alanine + di-trans,octa-cis-undecaprenyl phosphate = di-trans,octa-cis-undecaprenyl diphospho-N-acetyl-alpha-D-muramoyl-L-alanyl-D-glutamyl-meso-2,6-diaminopimeloyl-D-alanyl-D-alanine + UMP. It functions in the pathway cell wall biogenesis; peptidoglycan biosynthesis. Its function is as follows. Catalyzes the initial step of the lipid cycle reactions in the biosynthesis of the cell wall peptidoglycan: transfers peptidoglycan precursor phospho-MurNAc-pentapeptide from UDP-MurNAc-pentapeptide onto the lipid carrier undecaprenyl phosphate, yielding undecaprenyl-pyrophosphoryl-MurNAc-pentapeptide, known as lipid I. This chain is Phospho-N-acetylmuramoyl-pentapeptide-transferase, found in Clostridium botulinum (strain Eklund 17B / Type B).